The following is a 278-amino-acid chain: Bis(5'-nucleosyl)-tetraphosphatase, symmetrical (278 aa).

Belongs to the Ap4A hydrolase family.

The enzyme catalyses P(1),P(4)-bis(5'-adenosyl) tetraphosphate + H2O = 2 ADP + 2 H(+). Its function is as follows. Hydrolyzes diadenosine 5',5'''-P1,P4-tetraphosphate to yield ADP. The polypeptide is Bis(5'-nucleosyl)-tetraphosphatase, symmetrical (Nitrosococcus oceani (strain ATCC 19707 / BCRC 17464 / JCM 30415 / NCIMB 11848 / C-107)).